We begin with the raw amino-acid sequence, 82 residues long: Small ribosomal subunit protein bS16 (82 aa).

The protein belongs to the bacterial ribosomal protein bS16 family.

The sequence is that of Small ribosomal subunit protein bS16 from Pseudoalteromonas translucida (strain TAC 125).